Reading from the N-terminus, the 825-residue chain is Taste receptor cell protein 1 (825 aa).

The first 21 residues, 1-21 (MDKQWFPAAGILLAALLVVSA), serve as a signal peptide directing secretion. 2 disordered regions span residues 66 to 97 (EREP…GPSG) and 299 to 322 (TSPS…SASP). Over residues 302–322 (SQASSLHSPRPSSASPLSASP) the composition is skewed to low complexity.

In terms of tissue distribution, expression is restricted to circumvallate papillae.

This is Taste receptor cell protein 1 (Trcg1) from Mus musculus (Mouse).